Reading from the N-terminus, the 355-residue chain is Alanine racemase (355 aa).

The active-site Proton acceptor; specific for D-alanine is Lys34. Residue Lys34 is modified to N6-(pyridoxal phosphate)lysine. Arg133 lines the substrate pocket. The active-site Proton acceptor; specific for L-alanine is Tyr249. Substrate is bound at residue Met297.

Belongs to the alanine racemase family. It depends on pyridoxal 5'-phosphate as a cofactor.

It catalyses the reaction L-alanine = D-alanine. Its pathway is amino-acid biosynthesis; D-alanine biosynthesis; D-alanine from L-alanine: step 1/1. Functionally, catalyzes the interconversion of L-alanine and D-alanine. May also act on other amino acids. This is Alanine racemase (alr) from Rickettsia canadensis (strain McKiel).